Reading from the N-terminus, the 386-residue chain is Tumor necrosis factor receptor superfamily member 10D (386 aa).

2 disordered regions span residues 1–25 (MGLW…ARTA) and 62–90 (DEVP…SHRS). The N-terminal stretch at 1 to 55 (MGLWGQSVPTASSARAGRYPGARTASGTRPWLLDPKILKFVVFIVAVLLPVRVDS) is a signal peptide. The Extracellular portion of the chain corresponds to 56–211 (ATIPRQDEVP…ILGMLASPYH (156 aa)). TNFR-Cys repeat units follow at residues 58–97 (IPRQ…GACN), 98–139 (PCTE…DTVC), and 140–180 (QCEK…DIKC). A compositionally biased stretch (polar residues) spans 64–75 (VPQQTVAPQQQR). Cystine bridges form between cysteine 83–cysteine 96, cysteine 99–cysteine 115, cysteine 118–cysteine 131, cysteine 121–cysteine 139, cysteine 141–cysteine 155, cysteine 158–cysteine 172, and cysteine 162–cysteine 180. N-linked (GlcNAc...) asparagine glycosylation is present at asparagine 127. N-linked (GlcNAc...) asparagine glycosylation occurs at asparagine 182. The chain crosses the membrane as a helical span at residues 212–232 (YLIIIVVLVIILAVVVVGFSC). At 233 to 386 (RKKFISYLKG…DEAGSATSCL (154 aa)) the chain is on the cytoplasmic side. The region spanning 340–366 (SADISTLLDASATLEEGHAKETIQDQL) is the Death; truncated domain.

As to expression, widely expressed, in particular in fetal kidney, lung and liver, and in adult testis and liver. Also expressed in peripheral blood leukocytes, colon and small intestine, ovary, prostate, thymus, spleen, pancreas, kidney, lung, placenta and heart.

Its subcellular location is the membrane. Functionally, receptor for the cytotoxic ligand TRAIL. Contains a truncated death domain and hence is not capable of inducing apoptosis but protects against TRAIL-mediated apoptosis. Reports are contradictory with regards to its ability to induce the NF-kappa-B pathway. According to PubMed:9382840, it cannot but according to PubMed:9430226, it can induce the NF-kappa-B pathway. The polypeptide is Tumor necrosis factor receptor superfamily member 10D (Homo sapiens (Human)).